A 130-amino-acid chain; its full sequence is Small ribosomal subunit protein uS11 (130 aa).

It belongs to the universal ribosomal protein uS11 family. Part of the 30S ribosomal subunit. Interacts with proteins S7 and S18. Binds to IF-3.

Functionally, located on the platform of the 30S subunit, it bridges several disparate RNA helices of the 16S rRNA. Forms part of the Shine-Dalgarno cleft in the 70S ribosome. In Aliarcobacter butzleri (strain RM4018) (Arcobacter butzleri), this protein is Small ribosomal subunit protein uS11.